Consider the following 130-residue polypeptide: Small ribosomal subunit protein uS11 (130 aa).

Belongs to the universal ribosomal protein uS11 family. As to quaternary structure, part of the 30S ribosomal subunit. Interacts with proteins S7 and S18. Binds to IF-3.

Located on the platform of the 30S subunit, it bridges several disparate RNA helices of the 16S rRNA. Forms part of the Shine-Dalgarno cleft in the 70S ribosome. The sequence is that of Small ribosomal subunit protein uS11 from Gluconacetobacter diazotrophicus (strain ATCC 49037 / DSM 5601 / CCUG 37298 / CIP 103539 / LMG 7603 / PAl5).